Reading from the N-terminus, the 459-residue chain is Cobyrinate a,c-diamide synthase (459 aa).

A GATase cobBQ-type domain is found at Arg-249–Gly-446. Cys-332 serves as the catalytic Nucleophile.

It belongs to the CobB/CbiA family. Mg(2+) is required as a cofactor.

The enzyme catalyses cob(II)yrinate + 2 L-glutamine + 2 ATP + 2 H2O = cob(II)yrinate a,c diamide + 2 L-glutamate + 2 ADP + 2 phosphate + 2 H(+). The protein operates within cofactor biosynthesis; adenosylcobalamin biosynthesis; cob(II)yrinate a,c-diamide from sirohydrochlorin (anaerobic route): step 10/10. Functionally, catalyzes the ATP-dependent amidation of the two carboxylate groups at positions a and c of cobyrinate, using either L-glutamine or ammonia as the nitrogen source. The polypeptide is Cobyrinate a,c-diamide synthase (Syntrophotalea carbinolica (strain DSM 2380 / NBRC 103641 / GraBd1) (Pelobacter carbinolicus)).